We begin with the raw amino-acid sequence, 543 residues long: MFSLQELCRKNIYILPYPLGKHVLQQLGLYWKGHGSLQRIGDDHVLLQQDLIFSINEALRMAGEEGNNEVVKLLLLWEGNLHYAIIGALEGDRYDLIHKYYDQIGDCHKILPLIQDPQIFEKCHELSNSCNIRCLLEHAVKHDMLSILQKHREQIRLHLALTQILFELACHERKNDIIRWIGYSLHIHHLETIFDVAFAHKNLSLYVLGYELLMHKVNTEAAYIELPNLLSYHLRTAAAGGLLNFMLETIKHGGYVDKTVLSAAIRYKHRKIVAHFIHQVPRKTVKKLLLYAVQARAPKKTLNLLLSSLNYSVHTITKQLVHNVVIYSSTLVVKLLLMRRKNKLNLVDAVLARLVKYSTYTDIVQFMSEFSVSPERVIKMAARESRTFLIEMISKAAWGNHPQTLIHHLKQLAHTMKSQSGKDLIIYTIHYIYLNSNMLVAEEEKNIFKLAKFYANHNAVNRFKQVCEDYYALDVDARFKTLILECFEIAVQKNYPRIANIVDDYVRFLFYRGDITEEEIHEAYSLKDAEFYVDLKWLQHDLF.

Belongs to the asfivirus MGF 505 family.

In terms of biological role, plays a role in virus cell tropism, and may be required for efficient virus replication in macrophages. The polypeptide is Protein MGF 505-10R (African swine fever virus (isolate Warthog/Namibia/Wart80/1980) (ASFV)).